The following is an 814-amino-acid chain: Rho GTPase-activating protein 26 (814 aa).

The BAR domain occupies 7–262; that stretch reads EFSDCCLDSP…MKENPLEHKT (256 aa). Residues 265–369 enclose the PH domain; the sequence is PYTMEGYLYV…WMEAMDGREP (105 aa). The 186-residue stretch at 383-568 folds into the Rho-GAP domain; sequence AQLDSIGFSI…ILIENHEKIF (186 aa). Residues 624 to 648 show a composition bias toward low complexity; that stretch reads LESVSSNPNSILNSSSSLQPNMNSS. A disordered region spans residues 624-696; it reads LESVSSNPNS…MPTSSTSSDS (73 aa). Over residues 662 to 672 the composition is skewed to pro residues; the sequence is SLPPNPSPTSP. S668 bears the Phosphoserine mark. At T670 the chain carries Phosphothreonine. S671 is modified (phosphoserine). Residues 673–696 show a composition bias toward low complexity; sequence LSPSWPMFSAPSSPMPTSSTSSDS. In terms of domain architecture, SH3 spans 756–814; the sequence is TPFRKAKALYACKAEHDSELSFTAGTVFDNVHPSQEPGWLEGTLNGKTGLIPENYVEFL.

In terms of assembly, interacts with NYAP1, NYAP2 and MYO16. Interacts with MICAL1 and WDR44. Binds to the C-terminus of PTK2/FAK1. (Microbial infection) Interacts with human parainfluenza virus type 2 proteins P and V. In terms of processing, phosphorylated in a PINK1-dependent fashion promoting retrograde mitochondrial trafficking and clustering.

Its subcellular location is the endosome membrane. It localises to the cytoplasm. The protein localises to the cell junction. The protein resides in the focal adhesion. It is found in the cytoskeleton. GTPase-activating protein for RHOA and CDC42. Facilitates mitochondrial quality control by promoting Parkin-mediated recruitment of autophagosomes to damaged mitochondria. Negatively regulates the growth of human parainfluenza virus type 2 by inhibiting hPIV-2-mediated RHOA activation via interaction with two of its viral proteins P and V. Its function is as follows. Associates with MICAL1 on the endosomal membrane to promote Rab8-Rab10-dependent tubule extension. After dissociation of MICAL1, recruits WDR44 which connects the endoplasmic reticulum (ER) with the endosomal tubule, thereby participating in the export of a subset of neosynthesized proteins. The polypeptide is Rho GTPase-activating protein 26 (ARHGAP26) (Homo sapiens (Human)).